A 353-amino-acid chain; its full sequence is Photosystem II protein D1 (353 aa).

T2 carries the post-translational modification N-acetylthreonine. At T2 the chain carries Phosphothreonine. A run of 3 helical transmembrane segments spans residues 29 to 46 (YIGW…TATS), 118 to 133 (HFFL…EWEL), and 142 to 156 (WIAV…AATA). H118 contributes to the chlorophyll a binding site. Y126 serves as a coordination point for pheophytin a. 2 residues coordinate [CaMn4O5] cluster: D170 and E189. Residues 197-218 (FHMLGVAGVFGGSLFSAMHGSL) traverse the membrane as a helical segment. Chlorophyll a is bound at residue H198. Residues H215 and 264-265 (SF) contribute to the a quinone site. Position 215 (H215) interacts with Fe cation. Position 272 (H272) interacts with Fe cation. Residues 274-288 (FLAAWPVVGIWFTAL) traverse the membrane as a helical segment. Residues H332, E333, D342, and A344 each contribute to the [CaMn4O5] cluster site. The propeptide occupies 345–353 (SVEAPSVNG).

Belongs to the reaction center PufL/M/PsbA/D family. In terms of assembly, PSII is composed of 1 copy each of membrane proteins PsbA, PsbB, PsbC, PsbD, PsbE, PsbF, PsbH, PsbI, PsbJ, PsbK, PsbL, PsbM, PsbT, PsbX, PsbY, PsbZ, Psb30/Ycf12, at least 3 peripheral proteins of the oxygen-evolving complex and a large number of cofactors. It forms dimeric complexes. The D1/D2 heterodimer binds P680, chlorophylls that are the primary electron donor of PSII, and subsequent electron acceptors. It shares a non-heme iron and each subunit binds pheophytin, quinone, additional chlorophylls, carotenoids and lipids. D1 provides most of the ligands for the Mn4-Ca-O5 cluster of the oxygen-evolving complex (OEC). There is also a Cl(-1) ion associated with D1 and D2, which is required for oxygen evolution. The PSII complex binds additional chlorophylls, carotenoids and specific lipids. serves as cofactor. Tyr-161 forms a radical intermediate that is referred to as redox-active TyrZ, YZ or Y-Z. Post-translationally, C-terminally processed by CTPA; processing is essential to allow assembly of the oxygen-evolving complex and thus photosynthetic growth.

It localises to the plastid. Its subcellular location is the chloroplast thylakoid membrane. The enzyme catalyses 2 a plastoquinone + 4 hnu + 2 H2O = 2 a plastoquinol + O2. Its function is as follows. Photosystem II (PSII) is a light-driven water:plastoquinone oxidoreductase that uses light energy to abstract electrons from H(2)O, generating O(2) and a proton gradient subsequently used for ATP formation. It consists of a core antenna complex that captures photons, and an electron transfer chain that converts photonic excitation into a charge separation. The D1/D2 (PsbA/PsbD) reaction center heterodimer binds P680, the primary electron donor of PSII as well as several subsequent electron acceptors. This is Photosystem II protein D1 from Chaetosphaeridium globosum (Charophycean green alga).